A 238-amino-acid chain; its full sequence is Probable transcriptional regulatory protein VV2_1184 (238 aa).

It belongs to the TACO1 family.

It is found in the cytoplasm. In Vibrio vulnificus (strain CMCP6), this protein is Probable transcriptional regulatory protein VV2_1184.